The following is a 118-amino-acid chain: Beta-2-microglobulin (118 aa).

The N-terminal stretch at 1-20 (MARFVVLVLLGLLYLSHLDA) is a signal peptide. Residues 25-113 (PKVQVYSRHP…TTLSEPKVVK (89 aa)) form the Ig-like C1-type domain. A disulfide bridge connects residues cysteine 45 and cysteine 99.

The protein belongs to the beta-2-microglobulin family. As to quaternary structure, heterodimer of an alpha chain and a beta chain. Beta-2-microglobulin is the beta-chain of major histocompatibility complex class I molecules.

It is found in the secreted. In terms of biological role, component of the class I major histocompatibility complex (MHC). Involved in the presentation of peptide antigens to the immune system. The polypeptide is Beta-2-microglobulin (B2M) (Felis catus (Cat)).